A 1012-amino-acid polypeptide reads, in one-letter code: DNA polymerase catalytic subunit (1012 aa).

It belongs to the DNA polymerase type-B family.

Its subcellular location is the host nucleus. It catalyses the reaction DNA(n) + a 2'-deoxyribonucleoside 5'-triphosphate = DNA(n+1) + diphosphate. This chain is DNA polymerase catalytic subunit (U38), found in Human herpesvirus 6A (strain Uganda-1102) (HHV-6 variant A).